We begin with the raw amino-acid sequence, 410 residues long: FBD-associated F-box protein At5g38590 (410 aa).

The 47-residue stretch at Met-1–Thr-47 folds into the F-box domain. Residues Gly-335–Ala-385 enclose the FBD domain.

The sequence is that of FBD-associated F-box protein At5g38590 from Arabidopsis thaliana (Mouse-ear cress).